Consider the following 75-residue polypeptide: MPHVDIKCFPRELTDEQKTALAADITEVLIRHLNSKESAVSVALTQVEPDAWQAVWDSEIAPQMAQLIKQPGYSM.

Proline 2 (proton acceptor; via imino nitrogen) is an active-site residue.

The protein belongs to the 4-oxalocrotonate tautomerase family. PptA subfamily. In terms of assembly, homodimer.

Its subcellular location is the cytoplasm. This is Tautomerase PptA from Klebsiella pneumoniae subsp. pneumoniae (strain ATCC 700721 / MGH 78578).